Here is a 542-residue protein sequence, read N- to C-terminus: CTP synthase (542 aa).

The interval 1-265 (MARYVFITGG…DSEVLCAFGI (265 aa)) is amidoligase domain. S13 contacts CTP. UTP is bound at residue S13. 14 to 19 (SLGKGI) provides a ligand contact to ATP. Y54 contacts L-glutamine. D71 contacts ATP. 2 residues coordinate Mg(2+): D71 and E139. CTP contacts are provided by residues 146 to 148 (DIE), 186 to 191 (KTKPTQ), and K222. UTP contacts are provided by residues 186–191 (KTKPTQ) and K222. Positions 291–541 (TIAVVGKYTG…IEAAVEQSRL (251 aa)) constitute a Glutamine amidotransferase type-1 domain. A353 contributes to the L-glutamine binding site. The active-site Nucleophile; for glutamine hydrolysis is C380. L-glutamine-binding positions include 381–384 (FGMQ), E404, and R469. Active-site residues include H514 and E516.

It belongs to the CTP synthase family. As to quaternary structure, homotetramer.

It catalyses the reaction UTP + L-glutamine + ATP + H2O = CTP + L-glutamate + ADP + phosphate + 2 H(+). The catalysed reaction is L-glutamine + H2O = L-glutamate + NH4(+). The enzyme catalyses UTP + NH4(+) + ATP = CTP + ADP + phosphate + 2 H(+). The protein operates within pyrimidine metabolism; CTP biosynthesis via de novo pathway; CTP from UDP: step 2/2. Its activity is regulated as follows. Allosterically activated by GTP, when glutamine is the substrate; GTP has no effect on the reaction when ammonia is the substrate. The allosteric effector GTP functions by stabilizing the protein conformation that binds the tetrahedral intermediate(s) formed during glutamine hydrolysis. Inhibited by the product CTP, via allosteric rather than competitive inhibition. Its function is as follows. Catalyzes the ATP-dependent amination of UTP to CTP with either L-glutamine or ammonia as the source of nitrogen. Regulates intracellular CTP levels through interactions with the four ribonucleotide triphosphates. The sequence is that of CTP synthase from Bartonella tribocorum (strain CIP 105476 / IBS 506).